Here is a 338-residue protein sequence, read N- to C-terminus: Ketol-acid reductoisomerase (NADP(+)) (338 aa).

One can recognise a KARI N-terminal Rossmann domain in the interval Met-1–Thr-181. NADP(+) is bound by residues Tyr-24–Gln-27, Arg-47, and Ser-52. The active site involves His-107. Residue Gly-133 participates in NADP(+) binding. The 146-residue stretch at Asn-182 to Ile-327 folds into the KARI C-terminal knotted domain. The Mg(2+) site is built by Asp-190, Glu-194, Glu-226, and Glu-230. Substrate is bound at residue Ser-251.

This sequence belongs to the ketol-acid reductoisomerase family. The cofactor is Mg(2+).

It catalyses the reaction (2R)-2,3-dihydroxy-3-methylbutanoate + NADP(+) = (2S)-2-acetolactate + NADPH + H(+). It carries out the reaction (2R,3R)-2,3-dihydroxy-3-methylpentanoate + NADP(+) = (S)-2-ethyl-2-hydroxy-3-oxobutanoate + NADPH + H(+). It functions in the pathway amino-acid biosynthesis; L-isoleucine biosynthesis; L-isoleucine from 2-oxobutanoate: step 2/4. Its pathway is amino-acid biosynthesis; L-valine biosynthesis; L-valine from pyruvate: step 2/4. In terms of biological role, involved in the biosynthesis of branched-chain amino acids (BCAA). Catalyzes an alkyl-migration followed by a ketol-acid reduction of (S)-2-acetolactate (S2AL) to yield (R)-2,3-dihydroxy-isovalerate. In the isomerase reaction, S2AL is rearranged via a Mg-dependent methyl migration to produce 3-hydroxy-3-methyl-2-ketobutyrate (HMKB). In the reductase reaction, this 2-ketoacid undergoes a metal-dependent reduction by NADPH to yield (R)-2,3-dihydroxy-isovalerate. In Ralstonia nicotianae (strain ATCC BAA-1114 / GMI1000) (Ralstonia solanacearum), this protein is Ketol-acid reductoisomerase (NADP(+)).